The following is a 1253-amino-acid chain: Myosin heavy chain 95F (1253 aa).

The Myosin N-terminal SH3-like domain occupies Glu-3–Asp-54. The 710-residue stretch at Gln-57–Arg-766 folds into the Myosin motor domain. Gly-151–Thr-158 provides a ligand contact to ATP. Residues Gly-647–Pro-666 are actin-binding. One can recognise an IQ domain in the interval Arg-808–Lys-837. Residues Ala-900 to Gln-1022 are a coiled coil. Residues Pro-1187 to Gly-1193 form a hydrophobic region region. Residues Ala-1233 to Gln-1253 form a disordered region.

This sequence belongs to the TRAFAC class myosin-kinesin ATPase superfamily. Myosin family. As to expression, isoform B is present at a higher level in the head and gonads than in the thoraxes. Isoform 145 kDa is found only in the head. CLIP-190 and jar are coexpressed at several times in development and in a number of tissues, including embryonic axonal neuron processes and posterior pole.

Its subcellular location is the cytoplasm. It localises to the cytoskeleton. Functionally, myosin is a protein that binds to actin and has ATPase activity that is activated by actin. Together CLIP-190 and jar may coordinate the interaction between the actin and microtubule cytoskeleton. May link endocytic vesicles to microtubules and may be involved in transport in the early embryo and in the dynamic process of dorsal closure. It is believed that its function changes during the life cycle. The sequence is that of Myosin heavy chain 95F (jar) from Drosophila melanogaster (Fruit fly).